The primary structure comprises 355 residues: Blue-sensitive opsin P467 (355 aa).

At 1 to 36 (MNGTEGINFYVPLSNKTGLVRSPFEYPQYYLADPWK) the chain is on the extracellular side. N-linked (GlcNAc...) asparagine glycans are attached at residues Asn2 and Asn15. A helical transmembrane segment spans residues 37-61 (FKVLSFYMFFLIAAGMPLNGLTLFV). The Cytoplasmic segment spans residues 62-73 (TFQHKKLRQPLN). A helical membrane pass occupies residues 74–98 (YILVNLAAANLVTVCCGFTVTFYAS). The Extracellular segment spans residues 99–113 (WYAYFVFGPIGCAIE). A disulfide bridge links Cys110 with Cys187. Residues 114-133 (GFFATIGGQVALWSLVVLAI) form a helical membrane-spanning segment. At 134-152 (ERYIVICKPMGNFRFSATH) the chain is on the cytoplasmic side. A helical transmembrane segment spans residues 153-176 (AIMGIAFTWFMALACAGPPLFGWS). Residues 177–202 (RFIPEGMQCSCGPDYYTLNPDFHNES) lie on the Extracellular side of the membrane. Residue Asn200 is glycosylated (N-linked (GlcNAc...) asparagine). Residues 203–230 (YVIYMFIVHFTVPMVVIFFSYGRLVCKV) traverse the membrane as a helical segment. At 231 to 252 (REAAAQQQESATTQKAEKEVTR) the chain is on the cytoplasmic side. Residues 253–276 (MVILMVLGFLLAWTPYAATAIWIF) form a helical membrane-spanning segment. Residues 277-284 (TNRGAAFS) lie on the Extracellular side of the membrane. The helical transmembrane segment at 285-309 (VTFMTIPAFFSKSSSIYNPIIYVLL) threads the bilayer. Lys296 is subject to N6-(retinylidene)lysine. Over 310 to 355 (NKQFRNCMVTTICCGKNPFGDEDVSSSVSQSKTEVSSVSSSQVAPA) the chain is Cytoplasmic. Residues 333–355 (VSSSVSQSKTEVSSVSSSQVAPA) are disordered. Over residues 334–355 (SSSVSQSKTEVSSVSSSQVAPA) the composition is skewed to low complexity.

The protein belongs to the G-protein coupled receptor 1 family. Opsin subfamily. Phosphorylated on some or all of the serine and threonine residues present in the C-terminal region. In this lizard the color pigments are found in the rod-shaped photoreceptor cells which have been derived from ancestral cone-like photoreceptors.

It is found in the membrane. Visual pigments are the light-absorbing molecules that mediate vision. They consist of an apoprotein, opsin, covalently linked to cis-retinal. The chain is Blue-sensitive opsin P467 from Gekko gecko (Tokay gecko).